The sequence spans 298 residues: ATP synthase gamma chain (298 aa).

Belongs to the ATPase gamma chain family. As to quaternary structure, F-type ATPases have 2 components, CF(1) - the catalytic core - and CF(0) - the membrane proton channel. CF(1) has five subunits: alpha(3), beta(3), gamma(1), delta(1), epsilon(1). CF(0) has three main subunits: a, b and c.

It localises to the cell inner membrane. Produces ATP from ADP in the presence of a proton gradient across the membrane. The gamma chain is believed to be important in regulating ATPase activity and the flow of protons through the CF(0) complex. This is ATP synthase gamma chain from Francisella tularensis subsp. holarctica (strain LVS).